Here is a 166-residue protein sequence, read N- to C-terminus: Regulator of ribonuclease activity A (166 aa).

This sequence belongs to the RraA family. In terms of assembly, homotrimer. Binds to both RNA-binding sites in the C-terminal region of Rne and to RhlB.

The protein resides in the cytoplasm. Its function is as follows. Globally modulates RNA abundance by binding to RNase E (Rne) and regulating its endonucleolytic activity. Can modulate Rne action in a substrate-dependent manner by altering the composition of the degradosome. Modulates RNA-binding and helicase activities of the degradosome. The sequence is that of Regulator of ribonuclease activity A from Pasteurella multocida (strain Pm70).